A 108-amino-acid chain; its full sequence is Peptidyl-prolyl cis-trans isomerase FKBP1A (108 aa).

Residues 20-108 (GQTCVVHYTG…VFDVELLKLE (89 aa)) enclose the PPIase FKBP-type domain. Lys53 bears the N6-acetyllysine; alternate mark. At Lys53 the chain carries N6-succinyllysine; alternate.

Belongs to the FKBP-type PPIase family. FKBP1 subfamily. As to quaternary structure, interacts with TGFBR1; prevents TGFBR1 phosphorylation by TGFBR2 and stabilizes it in the inactive conformation. Interacts with ACVR1B and SMAD7. Identified in a complex composed of RYR1, PDE4D, PKA, FKBP1A and protein phosphatase 1 (PP1). Interacts directly with RYR2 and RYR3. Interacts directly with RYR1. Interacts with GLMN; rapamycin and FK506 abolish the interaction with GLMN in a dose dependent manner.

The protein localises to the cytoplasm. The protein resides in the cytosol. It localises to the sarcoplasmic reticulum membrane. The enzyme catalyses [protein]-peptidylproline (omega=180) = [protein]-peptidylproline (omega=0). Inhibited by both FK506 and rapamycin. Its function is as follows. Keeps in an inactive conformation TGFBR1, the TGF-beta type I serine/threonine kinase receptor, preventing TGF-beta receptor activation in absence of ligand. Recruits SMAD7 to ACVR1B which prevents the association of SMAD2 and SMAD3 with the activin receptor complex, thereby blocking the activin signal. May modulate the RYR1 calcium channel activity. PPIases accelerate the folding of proteins. It catalyzes the cis-trans isomerization of proline imidic peptide bonds in oligopeptides. This Mus musculus (Mouse) protein is Peptidyl-prolyl cis-trans isomerase FKBP1A (Fkbp1a).